Reading from the N-terminus, the 344-residue chain is Melanocyte-stimulating hormone receptor (344 aa).

The Extracellular portion of the chain corresponds to 1 to 37 (MPMQGAQRKLLGSLNSTPTATSNLGLAANHTGAPCLE). Residue Asn29 is glycosylated (N-linked (GlcNAc...) asparagine). Residues 38–63 (VPIPDGLFLSLGLVSLVENVLVVAAI) form a helical membrane-spanning segment. The Cytoplasmic segment spans residues 64 to 72 (AKNRNLHSS). A helical transmembrane segment spans residues 73–93 (MYCFICCLAVSDLLVSGSNML). The Extracellular portion of the chain corresponds to 94–118 (ETAIILLLEAGALVTRASVVQQLHN). A helical transmembrane segment spans residues 119–140 (TIDVLTCSSMLCSLCFLGAIAV). Over 141–163 (DRYISIFYALRYHSIMTLPRAQR) the chain is Cytoplasmic. The helical transmembrane segment at 164-183 (AIAAIWVASVLSSTLFITYY) threads the bilayer. At 184–191 (DHAAVLLC) the chain is on the extracellular side. Residues 192-211 (LVVFFLAMLVLMAVLYVHML) form a helical membrane-spanning segment. Over 212-240 (ARACQHAQGIIRLHKRQPPAHKGFGLRGA) the chain is Cytoplasmic. A helical transmembrane segment spans residues 241–266 (ATLTILLGIFFLCWGPFFLHLTLVVF). At 267-279 (CPQHMTCSCIFKN) the chain is on the extracellular side. The helical transmembrane segment at 280 to 300 (FKVFLTLIICNTIIDPLIYAF) threads the bilayer. Residues 301-344 (RSQELRRTLKEVLLCSRWPGCWAEGGGDSVWPGSCVTLRGPLPP) lie on the Cytoplasmic side of the membrane. Residue Cys315 is the site of S-palmitoyl cysteine attachment.

This sequence belongs to the G-protein coupled receptor 1 family. As to quaternary structure, interacts with MGRN1, but does not undergo MGRN1-mediated ubiquitination; this interaction competes with GNAS-binding and thus inhibits agonist-induced cAMP production. Interacts with OPN3; the interaction results in a decrease in MC1R-mediated cAMP signaling and ultimately a decrease in melanin production in melanocytes.

The protein localises to the cell membrane. Receptor for MSH (alpha, beta and gamma) and ACTH. The activity of this receptor is mediated by G proteins which activate adenylate cyclase. Mediates melanogenesis, the production of eumelanin (black/brown) and phaeomelanin (red/yellow), via regulation of cAMP signaling in melanocytes. In Callimico goeldii (Goeldi's marmoset), this protein is Melanocyte-stimulating hormone receptor (MC1R).